The sequence spans 387 residues: Lipid-A-disaccharide synthase (387 aa).

It belongs to the LpxB family.

The catalysed reaction is 2-N,3-O-bis[(3R)-3-hydroxytetradecanoyl]-alpha-D-glucosaminyl 1-phosphate + UDP-2-N,3-O-bis[(3R)-3-hydroxytetradecanoyl]-alpha-D-glucosamine = lipid A disaccharide (E. coli) + UDP + H(+). It catalyses the reaction a lipid X + a UDP-2-N,3-O-bis[(3R)-3-hydroxyacyl]-alpha-D-glucosamine = a lipid A disaccharide + UDP + H(+). It functions in the pathway glycolipid biosynthesis; lipid IV(A) biosynthesis; lipid IV(A) from (3R)-3-hydroxytetradecanoyl-[acyl-carrier-protein] and UDP-N-acetyl-alpha-D-glucosamine: step 5/6. Functionally, condensation of UDP-2,3-diacylglucosamine and 2,3-diacylglucosamine-1-phosphate to form lipid A disaccharide, a precursor of lipid A, a phosphorylated glycolipid that anchors the lipopolysaccharide to the outer membrane of the cell. The polypeptide is Lipid-A-disaccharide synthase (Blochmanniella pennsylvanica (strain BPEN)).